Here is a 185-residue protein sequence, read N- to C-terminus: Lipid A acyltransferase PagP (185 aa).

An N-terminal signal peptide occupies residues 1–14 (MKLKPVLYLLMLLG). Cysteine 15 is lipidated: N-palmitoyl cysteine. Residue cysteine 15 is the site of S-diacylglycerol cysteine attachment. Residues histidine 57, aspartate 100, and serine 101 contribute to the active site.

This sequence belongs to the lipid A palmitoyltransferase family. As to quaternary structure, homodimer.

It localises to the cell outer membrane. It carries out the reaction a lipid A + a 1,2-diacyl-sn-glycero-3-phosphocholine = a hepta-acyl lipid A + a 2-acyl-sn-glycero-3-phosphocholine. It catalyses the reaction a lipid IVA + a 1,2-diacyl-sn-glycero-3-phosphocholine = a lipid IVB + a 2-acyl-sn-glycero-3-phosphocholine. The enzyme catalyses a lipid IIA + a 1,2-diacyl-sn-glycero-3-phosphocholine = a lipid IIB + a 2-acyl-sn-glycero-3-phosphocholine. Functionally, transfers a fatty acid residue from the sn-1 position of a phospholipid to the N-linked hydroxyfatty acid chain on the proximal unit of lipid A or its precursors. This is Lipid A acyltransferase PagP from Erwinia sp. (strain Ejp617).